A 381-amino-acid polypeptide reads, in one-letter code: MATPYREKIEKMSSEVIDSNPYSRLMALKKMGIVNNYENIRNLSVIIVGLGGIGSVAAEMLTRCGIGKLLLFDYDTVEIANMNRLFFRPEQSGKSKTMAAQETLSSINPDVQFESHNYNITTIDNFEHFKGRIEKGGLVEGEPVDLVLGCVDNFEARTAINQACLELGKSWMESGVSENAISGHIQLIIPGESACFQCVPPLIVASGIDERTLKREGVCAASLPTTMGIVAGMLVQNTLKYLLKFGEVSSLLGYNALLDYFPKDNMKPNPECSNSFCIIHQQKYKEFLKNNPKENLIQNNNNNNINNNEKKSTYENEWGIELIETSEDFNNNNNNNNKPSNNSFEFSYDKKPTVELNEQSTVKVNSSSNLEDLMNQLKNMK.

ATP contacts are provided by Gly52, Asp73, Lys96, Asn119, and Asn153. Zn(2+) is bound by residues Cys195 and Cys198. Cys219 functions as the Glycyl thioester intermediate in the catalytic mechanism. Cys272 and Cys277 together coordinate Zn(2+).

Belongs to the ubiquitin-activating E1 family. UBA5 subfamily.

E1-like enzyme which activates ufm1. In Dictyostelium discoideum (Social amoeba), this protein is Ubiquitin-like modifier-activating enzyme 5 (uba5).